The following is a 647-amino-acid chain: A-type voltage-gated potassium channel KCND1 (647 aa).

Over 1 to 183 (MAAGVATWLP…RAFENPHTST (183 aa)) the chain is Cytoplasmic. Residues 2 to 20 (AAGVATWLPFARAAAVGWL) form an interaction with KCNIP1, KCNIP2, and other family members region. Zn(2+) is bound by residues His104, Cys131, and Cys132. The tract at residues 144–164 (AQRLAEDEEAEQTGDGPALPA) is disordered. Residues 184–205 (AALVFYYVTGFFIAVSVIANVV) form a helical membrane-spanning segment. The Extracellular portion of the chain corresponds to 206 to 230 (ETIPCRGPARRPPREQPCGDRFPLA). The chain crosses the membrane as a helical span at residues 231–252 (FFCMDTACVLIFTGEYLLRLFA). Topologically, residues 253–263 (APSRCRFLRSV) are cytoplasmic. The chain crosses the membrane as a helical span at residues 264-284 (MSLIDVVAILPYYIGLLVPKN). Over 285–287 (EDV) the chain is Extracellular. The helical; Voltage-sensor transmembrane segment at 288 to 308 (SGAFVTLRVFRVFRIFKFSRH) threads the bilayer. Over 309-323 (SQGLRILGYTLKSCA) the chain is Cytoplasmic. The interval 310–323 (QGLRILGYTLKSCA) is S4-S5 linker. A helical membrane pass occupies residues 324–345 (SELGFLLFSLTMAIIIFATVMF). Topologically, residues 346–359 (YAEKGTSKTNFTSI) are extracellular. An intramembrane region (helical) is located at residues 360 to 371 (PAAFWYTIVTMT). Residues 372 to 377 (TLGYGD) carry the Selectivity filter motif. Residues 372–379 (TLGYGDMV) lie within the membrane without spanning it. Residues 380–386 (PSTIAGK) lie on the Extracellular side of the membrane. A helical membrane pass occupies residues 387–415 (IFGSICSLSGVLVIALPVPVIVSNFSRIY). The Cytoplasmic portion of the chain corresponds to 416-647 (HQNQRADKRR…LPETVKISSL (232 aa)). Residues 474–489 (FEQQHHHLLHCLEKTT) form a required for dendritic targeting region. A compositionally biased stretch (low complexity) spans 510-520 (GRTSRSTSVSS). Residues 510–531 (GRTSRSTSVSSQPVGPSSLLSS) are disordered. Residues 521 to 530 (QPVGPSSLLS) are compositionally biased toward polar residues. The residue at position 555 (Ser555) is a Phosphoserine. Disordered regions lie at residues 564 to 584 (GLRR…PHDS) and 601 to 634 (IPTP…RLGT).

Belongs to the potassium channel family. D (Shal) (TC 1.A.1.2) subfamily. Kv4.1/KCND1 sub-subfamily. Component of heteromultimeric potassium channels. Identified in potassium channel complexes containing KCND1, KCND2, KCND3, KCNIP1, KCNIP2, KCNIP3, KCNIP4, DPP6 and DPP10. As to expression, detected in carotid body chemoreceptor cells and in frontal cortex.

It localises to the cell membrane. It catalyses the reaction K(+)(in) = K(+)(out). A-type voltage-gated potassium channel that mediates transmembrane potassium transport in excitable membranes in the brain. Mediates A-type current I(SA) in suprachiasmatic nucleus (SCN) neurons. Exhibits a low-threshold A-type current with a hyperpolarized steady-state inactivation midpoint and the recovery process was steeply voltage-dependent, with recovery being markedly faster at more negative potentials. May regulates repetitive firing rates in the suprachiasmatic nucleus (SCN) neurons and circadian rhythms in neuronal excitability and behavior. Contributes to the regulation of the circadian rhythm of action potential firing in suprachiasmatic nucleus neurons, which regulates the circadian rhythm of locomotor activity. The regulatory subunit KCNIP1 modulates the kinetics of channel inactivation, increases the current amplitudes and accelerates recovery from inactivation, shifts activation in a depolarizing direction. The regulatory subunit DPP10 decreases the voltage sensitivity of the inactivation channel gating. The chain is A-type voltage-gated potassium channel KCND1 from Oryctolagus cuniculus (Rabbit).